The primary structure comprises 151 residues: Large ribosomal subunit protein uL13 (151 aa).

It belongs to the universal ribosomal protein uL13 family. As to quaternary structure, part of the 50S ribosomal subunit.

This protein is one of the early assembly proteins of the 50S ribosomal subunit, although it is not seen to bind rRNA by itself. It is important during the early stages of 50S assembly. The protein is Large ribosomal subunit protein uL13 of Picosynechococcus sp. (strain ATCC 27264 / PCC 7002 / PR-6) (Agmenellum quadruplicatum).